The following is a 234-amino-acid chain: NAD-dependent protein deacylase (234 aa).

The 234-residue stretch at 1 to 234 (MTKQVRIVVL…LVPHYLAQFL (234 aa)) folds into the Deacetylase sirtuin-type domain. 12–31 (GAGISAESGIRTFRATDGLW) is an NAD(+) binding site. Substrate-binding residues include Tyr-56 and Arg-59. 93–96 (QNVD) lines the NAD(+) pocket. The active-site Proton acceptor is His-111. Positions 119 and 138 each coordinate Zn(2+). Residues 178–180 (GTS), 204–206 (NLE), and Ala-222 each bind NAD(+).

The protein belongs to the sirtuin family. Class III subfamily. It depends on Zn(2+) as a cofactor.

Its subcellular location is the cytoplasm. It carries out the reaction N(6)-acetyl-L-lysyl-[protein] + NAD(+) + H2O = 2''-O-acetyl-ADP-D-ribose + nicotinamide + L-lysyl-[protein]. It catalyses the reaction N(6)-succinyl-L-lysyl-[protein] + NAD(+) + H2O = 2''-O-succinyl-ADP-D-ribose + nicotinamide + L-lysyl-[protein]. In terms of biological role, NAD-dependent lysine deacetylase and desuccinylase that specifically removes acetyl and succinyl groups on target proteins. Modulates the activities of several proteins which are inactive in their acylated form. The chain is NAD-dependent protein deacylase from Pasteurella multocida (strain Pm70).